The following is a 147-amino-acid chain: Glucosamine 6-phosphate N-acetyltransferase (147 aa).

Residues 7-147 enclose the N-acetyltransferase domain; the sequence is LELRVLEESD…AHERQMRLDL (141 aa). Residues Thr28 and 86–88 each bind D-glucosamine 6-phosphate; that span reads EDV. Residues 88 to 90 and 96 to 101 contribute to the acetyl-CoA site; these read VVV and GAGLGK. D-glucosamine 6-phosphate is bound by residues 117–118 and Asp122; that span reads YK. 131–133 serves as a coordination point for acetyl-CoA; it reads YEK.

Belongs to the acetyltransferase family. GNA1 subfamily. Homodimer. In terms of processing, contains poly-N-acetyllactosamines.

Its subcellular location is the glycosome. It carries out the reaction D-glucosamine 6-phosphate + acetyl-CoA = N-acetyl-D-glucosamine 6-phosphate + CoA + H(+). It functions in the pathway nucleotide-sugar biosynthesis; UDP-N-acetyl-alpha-D-glucosamine biosynthesis; N-acetyl-alpha-D-glucosamine 1-phosphate from alpha-D-glucosamine 6-phosphate (route I): step 1/2. Functionally, involved in the biosynthesis of UDP-N-acetyl-alpha-D-glucosamine. Catalyzes the formation of N-acetyl-D-glucosamine 6-phosphate from acetyl-coenzyme A (acetyl-CoA) and D-glucosamine 6-phosphate. This chain is Glucosamine 6-phosphate N-acetyltransferase, found in Trypanosoma brucei brucei.